A 504-amino-acid polypeptide reads, in one-letter code: Probable ergothioneine transporter EgtUBC (504 aa).

One can recognise an ABC transmembrane type-1 domain in the interval 19 to 198 (LVQHIQISFV…LLAILFDFLL (180 aa)). The next 6 membrane-spanning stretches (helical) occupy residues 25-44 (ISFV…GIYL), 57-74 (VAAI…GLLI), 81-97 (IVPA…LPIL), 146-170 (MVLI…LILL), 179-198 (LILL…DFLL), and 210-229 (IITI…VPYF). The tract at residues 231–504 (SDKKEITIAG…DYLKDQGIIK (274 aa)) is ergothioneine binding domain.

It in the N-terminal section; belongs to the binding-protein-dependent transport system permease family. The protein in the C-terminal section; belongs to the OsmX family. As to quaternary structure, the complex is probably composed of at least an ATP-binding protein (EgtUA) and a transmembrane protein (EgtUBC).

It is found in the membrane. Functionally, part of an ABC transporter complex EgtU required for the uptake of ergothioneine (EGT), a natural low-molecular weight (LMW) thiol antioxidant. Responsible for the translocation of the substrate across the membrane. Also contains a C-terminal periplasmic solute-binding domain (SBD) which binds to EGT with sub-micromolar affinity. Does not bind glycine betaine, carnitine, choline, proline, or cholate. Plays a role in bile acid tolerance. Dispensable for choline uptake. Probably not involved in betaine, carnitine or choline mediated osmo- or chill tolerance. Plays a role in enhancing virulence in mice. The sequence is that of Probable ergothioneine transporter EgtUBC from Listeria monocytogenes serovar 1/2a (strain ATCC BAA-679 / EGD-e).